The primary structure comprises 454 residues: Chromosomal replication initiator protein DnaA (454 aa).

The domain I, interacts with DnaA modulators stretch occupies residues 1–71 (MTKEQWGQLQ…HEVRQEDPAV (71 aa)). The domain II stretch occupies residues 71 to 112 (VRRLRFAVPSHVNATTKPARPAQATAPRAPAEKTPRSTLSTA). The disordered stretch occupies residues 82–108 (VNATTKPARPAQATAPRAPAEKTPRST). Residues 84–99 (ATTKPARPAQATAPRA) are compositionally biased toward low complexity. The interval 113–334 (PLDARFTFDN…GALTRLCAFA (222 aa)) is domain III, AAA+ region. ATP-binding residues include glycine 157, glycine 159, lysine 160, and threonine 161. Positions 335 to 454 (SLVGREIDME…LELLRRALEE (120 aa)) are domain IV, binds dsDNA.

Belongs to the DnaA family. As to quaternary structure, oligomerizes as a right-handed, spiral filament on DNA at oriC.

The protein localises to the cytoplasm. Functionally, plays an essential role in the initiation and regulation of chromosomal replication. ATP-DnaA binds to the origin of replication (oriC) to initiate formation of the DNA replication initiation complex once per cell cycle. Binds the DnaA box (a 9 base pair repeat at the origin) and separates the double-stranded (ds)DNA. Forms a right-handed helical filament on oriC DNA; dsDNA binds to the exterior of the filament while single-stranded (ss)DNA is stabiized in the filament's interior. The ATP-DnaA-oriC complex binds and stabilizes one strand of the AT-rich DNA unwinding element (DUE), permitting loading of DNA polymerase. After initiation quickly degrades to an ADP-DnaA complex that is not apt for DNA replication. Binds acidic phospholipids. This Roseobacter denitrificans (strain ATCC 33942 / OCh 114) (Erythrobacter sp. (strain OCh 114)) protein is Chromosomal replication initiator protein DnaA.